We begin with the raw amino-acid sequence, 334 residues long: Lipoyl synthase (334 aa).

Residues 8–33 form a disordered region; it reads LNNDTRPKVEAPARPRHPEKAHRPDT. The span at 12-33 shows a compositional bias: basic and acidic residues; that stretch reads TRPKVEAPARPRHPEKAHRPDT. [4Fe-4S] cluster is bound by residues C68, C73, C79, C94, C98, C101, and S307. In terms of domain architecture, Radical SAM core spans 80–296; that stretch reads WEKRHATFMI…ETTAYAKGFL (217 aa).

The protein belongs to the radical SAM superfamily. Lipoyl synthase family. [4Fe-4S] cluster serves as cofactor.

The protein resides in the cytoplasm. The enzyme catalyses [[Fe-S] cluster scaffold protein carrying a second [4Fe-4S](2+) cluster] + N(6)-octanoyl-L-lysyl-[protein] + 2 oxidized [2Fe-2S]-[ferredoxin] + 2 S-adenosyl-L-methionine + 4 H(+) = [[Fe-S] cluster scaffold protein] + N(6)-[(R)-dihydrolipoyl]-L-lysyl-[protein] + 4 Fe(3+) + 2 hydrogen sulfide + 2 5'-deoxyadenosine + 2 L-methionine + 2 reduced [2Fe-2S]-[ferredoxin]. It participates in protein modification; protein lipoylation via endogenous pathway; protein N(6)-(lipoyl)lysine from octanoyl-[acyl-carrier-protein]: step 2/2. Its function is as follows. Catalyzes the radical-mediated insertion of two sulfur atoms into the C-6 and C-8 positions of the octanoyl moiety bound to the lipoyl domains of lipoate-dependent enzymes, thereby converting the octanoylated domains into lipoylated derivatives. The sequence is that of Lipoyl synthase from Methylorubrum populi (strain ATCC BAA-705 / NCIMB 13946 / BJ001) (Methylobacterium populi).